A 695-amino-acid chain; its full sequence is N-terminal acetyltransferase A complex subunit-like protein C418.02 (695 aa).

TPR repeat units follow at residues 8–41, 43–75, 76–109, 111–143, 145–177, 217–250, 262–296, 365–398, 399–432, and 477–510; these read EAFLFDRSIDQFEKGQYSKSLKTIQSVLKKKPKH, DSVALLGLNLCKLHDSRSALLKCGYASSIDPKS, QFCWHALAIVYRETKDYNNSLKCYQNALAISPNN, SLWYDAAYLQAQLGLYQPLFDNWNRLLQLDSSN, EYRLCFTLSAFLSGNYKESLEQIQYLISSCNLS, FNFEHIKADFAFRQKNYEESIYLYARLLIKFPNR, WNFYKSGGLALDLLLKRTDSLIKTFSEILQTGISV, LWCTYCLCLAHYKLGDYEESNYWLNLAIDHTPTY, PELFLAKAKIFLCMGEIEEALCSFKRSVELDKSD, and VWFLVEDGESLLRQKLYGLALKRFHSIYQIYKKW.

Component of the N-terminal acetyltransferase A (NatA) complex.

The protein localises to the cytoplasm. It is found in the nucleus. Its function is as follows. Non-catalytic component of the NatA N-terminal acetyltransferase, which catalyzes acetylation of proteins beginning with Met-Ser, Met-Gly and Met-Ala. N-acetylation plays a role in normal eukaryotic translation and processing, protect against proteolytic degradation and protein turnover. The protein is N-terminal acetyltransferase A complex subunit-like protein C418.02 of Schizosaccharomyces pombe (strain 972 / ATCC 24843) (Fission yeast).